We begin with the raw amino-acid sequence, 191 residues long: Small ribosomal subunit protein uS5 (191 aa).

The disordered stretch occupies residues M1 to D20. The region spanning F23 to V86 is the S5 DRBM domain.

Belongs to the universal ribosomal protein uS5 family. As to quaternary structure, part of the 30S ribosomal subunit. Contacts proteins S4 and S8.

Its function is as follows. With S4 and S12 plays an important role in translational accuracy. Located at the back of the 30S subunit body where it stabilizes the conformation of the head with respect to the body. In Rhodopseudomonas palustris (strain HaA2), this protein is Small ribosomal subunit protein uS5.